The primary structure comprises 388 residues: Formate-dependent phosphoribosylglycinamide formyltransferase (388 aa).

N(1)-(5-phospho-beta-D-ribosyl)glycinamide-binding positions include 20–21 (EL) and E80. ATP is bound by residues R112, K153, 158-163 (SSGKGQ), 193-196 (EEFI), and E201. Positions 117-306 (RLAFEKLGLR…EFEIHARAIL (190 aa)) constitute an ATP-grasp domain. 2 residues coordinate Mg(2+): E265 and E277. N(1)-(5-phospho-beta-D-ribosyl)glycinamide-binding positions include D284, K352, and 359-360 (RR).

It belongs to the PurK/PurT family. In terms of assembly, homodimer.

It catalyses the reaction N(1)-(5-phospho-beta-D-ribosyl)glycinamide + formate + ATP = N(2)-formyl-N(1)-(5-phospho-beta-D-ribosyl)glycinamide + ADP + phosphate + H(+). It participates in purine metabolism; IMP biosynthesis via de novo pathway; N(2)-formyl-N(1)-(5-phospho-D-ribosyl)glycinamide from N(1)-(5-phospho-D-ribosyl)glycinamide (formate route): step 1/1. Involved in the de novo purine biosynthesis. Catalyzes the transfer of formate to 5-phospho-ribosyl-glycinamide (GAR), producing 5-phospho-ribosyl-N-formylglycinamide (FGAR). Formate is provided by PurU via hydrolysis of 10-formyl-tetrahydrofolate. The protein is Formate-dependent phosphoribosylglycinamide formyltransferase of Methanococcus maripaludis (strain DSM 14266 / JCM 13030 / NBRC 101832 / S2 / LL).